The primary structure comprises 647 residues: Pumilio homolog 3 (647 aa).

Positions 1-10 are enriched in basic residues; that stretch reads MEVKGKKKIT. Residues 1 to 123 form a disordered region; that stretch reads MEVKGKKKIT…KKKKELKQNR (123 aa). Lysine 33 carries the N6-acetyllysine modification. Over residues 59–68 the composition is skewed to basic residues; sequence PGKKRVKQFK. The span at 93-123 shows a compositional bias: basic and acidic residues; it reads FQPDGKSDESAAKKPKWDDFKKKKKELKQNR. The Nuclear localization signal signature appears at 105–117; that stretch reads KKPKWDDFKKKKK. In terms of domain architecture, PUM-HD spans 142 to 509; the sequence is ESLRRKDCDK…VVLDKSVCVL (368 aa). Pumilio repeat units lie at residues 176–211, 212–247, 248–276, 288–324, 325–360, 361–396, 397–434, 435–503, 504–550, 551–595, and 596–635; these read HDST…LSKA, KYSR…MLRH, SEAS…ELYG, PTLE…VIKH, SLVH…LAHT, HDGA…IANG, QYSH…IVND, KYGR…VVLD, KSVC…IAEH, PAGH…WASI, and NRGA…KSTS.

As to quaternary structure, interacts with PARP1 (via catalytic domain).

It localises to the nucleus. It is found in the nucleolus. Its subcellular location is the nucleoplasm. The protein resides in the chromosome. Inhibits the poly(ADP-ribosyl)ation activity of PARP1 and the degradation of PARP1 by CASP3 following genotoxic stress. Binds to double-stranded RNA or DNA without sequence specificity. Involved in development of the eye and of primordial germ cells. In Rattus norvegicus (Rat), this protein is Pumilio homolog 3.